A 1330-amino-acid polypeptide reads, in one-letter code: Protein PUTATIVE RECOMBINATION INITIATION DEFECT 1 (1330 aa).

The tract at residues 1310–1330 (REGRVSPIQEETRQMQTERIV) is disordered.

In terms of assembly, interacts with SPO11-1. According to PubMed:28855712, may interact with SPO11-2; this is in contradiction with PubMed:9461215 which claims that it seems to not interact with SPO11-2. Binds to DFO, PRD3 and MTOPVIB. Facilitates an interaction between PRD3 and DFO. In terms of tissue distribution, expressed in flower buds.

The protein localises to the nucleus. Functionally, involved in DNA cleavage that forms the double-strand breaks (DSB) that initiate meiotic recombination. The chain is Protein PUTATIVE RECOMBINATION INITIATION DEFECT 1 from Arabidopsis thaliana (Mouse-ear cress).